Consider the following 1234-residue polypeptide: 1-phosphatidylinositol 4,5-bisphosphate phosphodiesterase beta-3 (1234 aa).

Ala2 is subject to N-acetylalanine. The 152-residue stretch at 315-466 folds into the PI-PLC X-box domain; that stretch reads MDMTQPLSAY…LMGRILVKNK (152 aa). Catalysis depends on residues His330 and His377. The segment at 465 to 586 is disordered; sequence NKKRHRPSTG…GTASSEVNAT (122 aa). A phosphoserine mark is found at Ser472, Ser488, Ser493, and Ser535. Residues 486-513 show a composition bias toward low complexity; that stretch reads EQSNSALSESSAATEPSSPQLGSPSSDS. The span at 554–566 shows a compositional bias: acidic residues; the sequence is REDEEEDEEEEET. Polar residues predominate over residues 577-586; sequence GTASSEVNAT. Positions 589 to 705 constitute a PI-PLC Y-box domain; that stretch reads MSTLVNYVEP…GYLLKPEFMR (117 aa). The region spanning 706–834 is the C2 domain; that stretch reads RPDKSFDPFT…RNEANQPLCL (129 aa). Polar residues predominate over residues 886–907; the sequence is ASTEMCQETPSQQQGSQLSSNP. Residues 886-936 are disordered; it reads ASTEMCQETPSQQQGSQLSSNPVPNPLDDSPRWPPGPTTSPTSTSLSSPGQ. A compositionally biased stretch (low complexity) spans 924–934; that stretch reads TSPTSTSLSSP. 2 positions are modified to phosphoserine: Ser925 and Ser1105. The interval 1196 to 1234 is disordered; sequence SEGLGDGPLVACASNGHAAGSGGHQSGADSESQEENTQL. The segment at 1231-1234 is interaction with SHANK2; sequence NTQL.

As to quaternary structure, interacts with LPAR2. Interacts with SHANK2. Requires Ca(2+) as cofactor. Expressed in parotid gland, brain, liver, uterus, lung, heart, adrenal gland, and ovary. Not detected in spleen, pancreas, intestine, thymus or kidney.

It localises to the cytoplasm. Its subcellular location is the membrane. The protein resides in the nucleus. The catalysed reaction is a 1,2-diacyl-sn-glycero-3-phospho-(1D-myo-inositol-4,5-bisphosphate) + H2O = 1D-myo-inositol 1,4,5-trisphosphate + a 1,2-diacyl-sn-glycerol + H(+). The enzyme catalyses a 1,2-diacyl-sn-glycero-3-phospho-(1D-myo-inositol) + H2O = 1D-myo-inositol 1-phosphate + a 1,2-diacyl-sn-glycerol + H(+). With respect to regulation, activated by G(q)/G(11) G alpha proteins in response to ligand-binding to G protein-coupled receptors. Catalyzes the production of the second messenger molecules diacylglycerol (DAG) and inositol 1,4,5-trisphosphate (IP3). Key transducer of G protein-coupled receptor signaling: activated by G(q)/G(11) G alpha proteins downstream of G protein-coupled receptors activation. In neutrophils, participates in a phospholipase C-activating N-formyl peptide-activated GPCR (G protein-coupled receptor) signaling pathway by promoting RASGRP4 activation by DAG, to promote neutrophil functional responses. The polypeptide is 1-phosphatidylinositol 4,5-bisphosphate phosphodiesterase beta-3 (Rattus norvegicus (Rat)).